The following is a 316-amino-acid chain: Mannose-6-phosphate isomerase (316 aa).

Zn(2+) contacts are provided by glutamine 95, histidine 97, glutamate 114, and histidine 171. The active site involves arginine 191.

This sequence belongs to the mannose-6-phosphate isomerase type 1 family. Requires Zn(2+) as cofactor.

The enzyme catalyses D-mannose 6-phosphate = D-fructose 6-phosphate. In Streptococcus mutans serotype c (strain ATCC 700610 / UA159), this protein is Mannose-6-phosphate isomerase (pmi).